Reading from the N-terminus, the 481-residue chain is MAQSPVSAEVIHQVEECLDEDEKEMMLFLCRDVTENLAAPNVRDLLDSLSERGQLSFATLAELLYRVRRFDLLKRILKTDKATVEDHLRRNPHLVSDYRVLLMEIGESLDQNDVSSLVFLTRDYTGRGKIAKDKSFLDLVIELEKLNLIASDQLNLLEKCLKNIHRIDLNTKIQKYTQSSQGARSNMNTLQASLPKLSIKYNSRLQNGRSKEPRFVEYRDSQRTLVKTSIQESGAFLPPHIREETYRMQSKPLGICLIIDCIGNDTKYLQETFTSLGYHIQLFLFPKSHDITQIVRRYASMAQHQDYDSFACVLVSLGGSQSMMGRDQVHSGFSLDHVKNMFTGDTCPSLRGKPKLFFIQNYESLGSQLEDSSLEVDGPSIKNVDSKPLQPRHCTTHPEADIFWSLCTADVSHLEKPSSSSSVYLQKLSQQLKQGRRRPLVDLHVELMDKVYAWNSGVSSKEKYSLSLQHTLRKKLILAPT.

2 DED domains span residues 6 to 78 and 97 to 172; these read VSAE…RILK and DYRV…LNTK. The tract at residues 6–200 is interaction with CASP8; the sequence is VSAEVIHQVE…QASLPKLSIK (195 aa). Residues 6–229 form an interaction with FADD region; the sequence is VSAEVIHQVE…DSQRTLVKTS (224 aa). Residues 6–307 form an interaction with CASP8 propeptide region; it reads VSAEVIHQVE…YASMAQHQDY (302 aa). The segment at 197–436 is interaction with CASP3; that stretch reads LSIKYNSRLQ…KLSQQLKQGR (240 aa). The interval 197–481 is interaction with TRAF1 and TRAF2; sequence LSIKYNSRLQ…LRKKLILAPT (285 aa). The tract at residues 219–481 is interaction with CASP8 subunits p18 and p10; the sequence is RDSQRTLVKT…LRKKLILAPT (263 aa). A caspase region spans residues 265 to 360; sequence DTKYLQETFT…RGKPKLFFIQ (96 aa). An interaction with CASP8 region spans residues 372 to 481; sequence SSLEVDGPSI…LRKKLILAPT (110 aa).

This sequence belongs to the peptidase C14A family. As to quaternary structure, TNFRSF6 stimulation triggers recruitment to the death-inducing signaling complex (DISC) formed by TNFRSF6, FADD and CASP8. A proteolytic fragment (p43) stays associated with the DISC. Interacts with RIPK1. Post-translationally, proteolytically processed by CASP8 generating subunits p43 and p12. Highly expressed in heart.

In terms of biological role, apoptosis regulator protein which may function as a crucial link between cell survival and cell death pathways in mammalian cells. Acts as an inhibitor of TNFRSF6 mediated apoptosis. A proteolytic fragment (p43) is likely retained in the death-inducing signaling complex (DISC) thereby blocking further recruitment and processing of caspase-8 at the complex. Full length and shorter isoforms have been shown either to induce apoptosis or to reduce TNFRSF-triggered apoptosis. Lacks enzymatic (caspase) activity. This chain is CASP8 and FADD-like apoptosis regulator (Cflar), found in Mus musculus (Mouse).